Reading from the N-terminus, the 361-residue chain is Chorismate synthase (361 aa).

Residues Arg48 and Arg54 each contribute to the NADP(+) site. Residues 125–127, 238–239, Gly278, 293–297, and Arg319 contribute to the FMN site; these read RSS, NA, and KPTSS.

This sequence belongs to the chorismate synthase family. In terms of assembly, homotetramer. FMNH2 serves as cofactor.

The catalysed reaction is 5-O-(1-carboxyvinyl)-3-phosphoshikimate = chorismate + phosphate. Its pathway is metabolic intermediate biosynthesis; chorismate biosynthesis; chorismate from D-erythrose 4-phosphate and phosphoenolpyruvate: step 7/7. Functionally, catalyzes the anti-1,4-elimination of the C-3 phosphate and the C-6 proR hydrogen from 5-enolpyruvylshikimate-3-phosphate (EPSP) to yield chorismate, which is the branch point compound that serves as the starting substrate for the three terminal pathways of aromatic amino acid biosynthesis. This reaction introduces a second double bond into the aromatic ring system. The protein is Chorismate synthase of Salmonella arizonae (strain ATCC BAA-731 / CDC346-86 / RSK2980).